A 445-amino-acid chain; its full sequence is 23S rRNA (uracil(1939)-C(5))-methyltransferase RlmD (445 aa).

Residues 12–70 (SKQLSSKLSLNVTQLDHLGAGIAHHQGKIVFINGALPGETVQVQLTEQKKKFSRAKLLK) enclose the TRAM domain. [4Fe-4S] cluster is bound by residues C83, C89, C92, and C171. Positions 278, 307, 312, 328, 355, and 375 each coordinate S-adenosyl-L-methionine. C401 (nucleophile) is an active-site residue.

The protein belongs to the class I-like SAM-binding methyltransferase superfamily. RNA M5U methyltransferase family. RlmD subfamily.

It catalyses the reaction uridine(1939) in 23S rRNA + S-adenosyl-L-methionine = 5-methyluridine(1939) in 23S rRNA + S-adenosyl-L-homocysteine + H(+). Its function is as follows. Catalyzes the formation of 5-methyl-uridine at position 1939 (m5U1939) in 23S rRNA. This Shewanella piezotolerans (strain WP3 / JCM 13877) protein is 23S rRNA (uracil(1939)-C(5))-methyltransferase RlmD.